The chain runs to 246 residues: Ribonuclease PH (246 aa).

Residues 67-87 (NMLPGSTSPRKRRDRSGKVDG) are disordered. Residues Arg88 and 126-128 (GTR) contribute to the phosphate site.

Belongs to the RNase PH family. Homohexameric ring arranged as a trimer of dimers.

It carries out the reaction tRNA(n+1) + phosphate = tRNA(n) + a ribonucleoside 5'-diphosphate. In terms of biological role, phosphorolytic 3'-5' exoribonuclease that plays an important role in tRNA 3'-end maturation. Removes nucleotide residues following the 3'-CCA terminus of tRNAs; can also add nucleotides to the ends of RNA molecules by using nucleoside diphosphates as substrates, but this may not be physiologically important. Probably plays a role in initiation of 16S rRNA degradation (leading to ribosome degradation) during starvation. This Rhodopirellula baltica (strain DSM 10527 / NCIMB 13988 / SH1) protein is Ribonuclease PH.